The chain runs to 240 residues: Large ribosomal subunit protein uL1c (240 aa).

It belongs to the universal ribosomal protein uL1 family. In terms of assembly, part of the 50S ribosomal subunit.

It is found in the plastid. Its subcellular location is the chloroplast. Its function is as follows. Binds directly to 23S rRNA. Might be involved in E site tRNA release (Potential). The chain is Large ribosomal subunit protein uL1c (rpl1) from Cyanidium caldarium (Red alga).